Reading from the N-terminus, the 127-residue chain is MSAGQTYYEFYRGSRHVHIGTALTDALDELITQGDIPPQLAMRVLQQFDKSLTECLQKGVKNKTTIKGHLSTYRLCDDVWTFVVKDPQFKMEGVGAGSEMVTGSKIKIVACKSGDAADGKKAGGARE.

This sequence belongs to the TFIIA subunit 2 family. As to quaternary structure, TFIIA is a heterodimer composed of the large TOA1 and the small TOA2 subunits.

The protein localises to the nucleus. Its function is as follows. TFIIA is a component of the transcription machinery of RNA polymerase II and plays an important role in transcriptional activation. TFIIA in a complex with tbp mediates transcriptional activity. The protein is Transcription initiation factor IIA subunit 2 (TOA2) of Cryptococcus neoformans var. neoformans serotype D (strain B-3501A) (Filobasidiella neoformans).